A 151-amino-acid chain; its full sequence is ALK and LTK ligand 2 (151 aa).

The N-terminal stretch at 1-25 (MRVSGRPMLLALLLLLSTVGDPGHA) is a signal peptide. 2 disulfide bridges follow: Cys-112/Cys-148 and Cys-126/Cys-135.

This sequence belongs to the ALKAL family. Homodimer.

Its subcellular location is the secreted. It is found in the cell membrane. Its function is as follows. Cytokine that acts as a physiological ligand for receptor tyrosine kinases LTK and ALK, leading to their activation. Cytokine-binding is sufficient to activate LTK. In contrast, ALKAL2-driven activation of ALK is coupled with heparin-binding to ALK. Stimulation of ALK signaling is involved in neural development and regulation of energy expenditure. In Rattus norvegicus (Rat), this protein is ALK and LTK ligand 2.